A 1403-amino-acid polypeptide reads, in one-letter code: DNA-directed RNA polymerase subunit beta' (1403 aa).

4 residues coordinate Zn(2+): Cys-71, Cys-73, Cys-86, and Cys-89. Residues Asp-462, Asp-464, and Asp-466 each coordinate Mg(2+). Zn(2+) contacts are provided by Cys-811, Cys-885, Cys-892, and Cys-895.

The protein belongs to the RNA polymerase beta' chain family. As to quaternary structure, the RNAP catalytic core consists of 2 alpha, 1 beta, 1 beta' and 1 omega subunit. When a sigma factor is associated with the core the holoenzyme is formed, which can initiate transcription. Mg(2+) serves as cofactor. The cofactor is Zn(2+).

It carries out the reaction RNA(n) + a ribonucleoside 5'-triphosphate = RNA(n+1) + diphosphate. DNA-dependent RNA polymerase catalyzes the transcription of DNA into RNA using the four ribonucleoside triphosphates as substrates. The polypeptide is DNA-directed RNA polymerase subunit beta' (Bartonella bacilliformis (strain ATCC 35685 / KC583 / Herrer 020/F12,63)).